The following is a 173-amino-acid chain: Chorion protein S19 (173 aa).

A signal peptide spans 1-21 (MNKFATLAVIFCACIVGSCYA).

It belongs to the chorion protein S19 family.

It is found in the secreted. In terms of biological role, chorion membrane (egg shell) protein; plays a role in protecting the egg from the environment. The protein is Chorion protein S19 (Cp19) of Drosophila melanogaster (Fruit fly).